The chain runs to 326 residues: GTP 3',8-cyclase (326 aa).

The Radical SAM core domain maps to 4–227 (KHERNINYMR…LTPQKNILGN (224 aa)). GTP is bound at residue R13. Residues C20 and C24 each coordinate [4Fe-4S] cluster. Residue Y26 coordinates S-adenosyl-L-methionine. Residue C27 participates in [4Fe-4S] cluster binding. A GTP-binding site is contributed by R63. G67 is a binding site for S-adenosyl-L-methionine. T94 is a binding site for GTP. S-adenosyl-L-methionine is bound at residue S118. GTP is bound at residue K155. M189 contributes to the S-adenosyl-L-methionine binding site. The [4Fe-4S] cluster site is built by C253 and C256. Position 258 to 260 (258 to 260 (RIR)) interacts with GTP. A [4Fe-4S] cluster-binding site is contributed by C270.

This sequence belongs to the radical SAM superfamily. MoaA family. In terms of assembly, monomer and homodimer. Requires [4Fe-4S] cluster as cofactor.

It catalyses the reaction GTP + AH2 + S-adenosyl-L-methionine = (8S)-3',8-cyclo-7,8-dihydroguanosine 5'-triphosphate + 5'-deoxyadenosine + L-methionine + A + H(+). The protein operates within cofactor biosynthesis; molybdopterin biosynthesis. Its function is as follows. Catalyzes the cyclization of GTP to (8S)-3',8-cyclo-7,8-dihydroguanosine 5'-triphosphate. The chain is GTP 3',8-cyclase from Syntrophomonas wolfei subsp. wolfei (strain DSM 2245B / Goettingen).